Reading from the N-terminus, the 335-residue chain is Methionine import ATP-binding protein MetN 1 (335 aa).

Residues 2 to 242 (IEFQNVHKTY…PKHPTTRRFV (241 aa)) enclose the ABC transporter domain. Position 38-45 (38-45 (GHSGAGKS)) interacts with ATP.

Belongs to the ABC transporter superfamily. Methionine importer (TC 3.A.1.24) family. The complex is composed of two ATP-binding proteins (MetN), two transmembrane proteins (MetI) and a solute-binding protein (MetQ).

It localises to the cell inner membrane. The enzyme catalyses L-methionine(out) + ATP + H2O = L-methionine(in) + ADP + phosphate + H(+). It catalyses the reaction D-methionine(out) + ATP + H2O = D-methionine(in) + ADP + phosphate + H(+). Part of the ABC transporter complex MetNIQ involved in methionine import. Responsible for energy coupling to the transport system. This is Methionine import ATP-binding protein MetN 1 from Pseudomonas fluorescens (strain ATCC BAA-477 / NRRL B-23932 / Pf-5).